We begin with the raw amino-acid sequence, 177 residues long: Nucleoside-triphosphatase THEP1 (177 aa).

ATP-binding positions include 10-17 (GKPGIGKT) and 101-108 (CLVIDEIG).

Belongs to the THEP1 NTPase family.

It catalyses the reaction a ribonucleoside 5'-triphosphate + H2O = a ribonucleoside 5'-diphosphate + phosphate + H(+). Its function is as follows. Has nucleotide phosphatase activity towards ATP, GTP, CTP, TTP and UTP. May hydrolyze nucleoside diphosphates with lower efficiency. In Natranaerobius thermophilus (strain ATCC BAA-1301 / DSM 18059 / JW/NM-WN-LF), this protein is Nucleoside-triphosphatase THEP1.